Consider the following 801-residue polypeptide: MAALAEEQTEVAVKLEPEGPPTLLPPQAGDGAGEGSGGTPNNGPNGGGGGNVAVAAAAGGDGGTPKPGVAVSAAAPAGAAPVPAAPAEAGAPHDRQTLLAVLQFLRQSNLREAEEALRREARLLEEAVAGSGAPGELDGAGAEAASALLSRVTASVPGSAAPEPPGTGASVTSVFSGSASGPAAPGKVASVAVEDQPDVSAVLSAYNQQGDPTMYEEYYSGLKHFIECSLDCHRAELSQLFYPLFVHMYLELVYNQHENEAKSFFEKFHGDQECYYQDDLRVLSSLTKKEHMKGNETMLDFRTSKFVLRIYRDSYQLLKRHLQEKQNNQIWNIVQEHLYIDIFDGMPRSKQQIDAMVGSLAGEAKREANKSKVFFGLLKEPEIEVPLDDEDEEGENEEGKPKKKKPKKDSIGSKSKKQDPNAPPQNRIPLPELKDSDKLDKIMNMKETTKRVRLGPDCLPSICFYTFLNAYQGLTAVDVTDDSSLIAGGFADSTVRVWSVTPKKLRSVKQASDLSLIDKESDDVLERIMDEKTASELKILYGHSGPVYGASFSPDRNYLLSSSEDGTVRLWSLQTFTCLVGYKGHNYPVWDTQFSPYGYYFVSGGHDRVARLWATDHYQPLRIFAGHLADVNCTRYHPNSNYVATGSADRTVRLWDVLNGNCVRIFTGHKGPIHSLTFSPNGRFLATGATDGRVLLWDIGHGLMVGELKGHTDTVCSLRFSRDGEILASGSMDNTVRLWDAVKAFEDLETDDFTTATGHINLPENSQELLLGTYMTKSTPVVHLHFTRRNLVLAAGAYSPQ.

The interval 1–69 is disordered; that stretch reads MAALAEEQTE…GDGGTPKPGV (69 aa). The span at 30-51 shows a compositional bias: gly residues; sequence DGAGEGSGGTPNNGPNGGGGGN. The region spanning 93–125 is the LisH domain; that stretch reads HDRQTLLAVLQFLRQSNLREAEEALRREARLLE. 2 disordered regions span residues 156 to 176 and 385 to 438; these read VPGS…SVFS and VPLD…DSDK. Residues 385-396 are compositionally biased toward acidic residues; it reads VPLDDEDEEGEN. A compositionally biased stretch (basic and acidic residues) spans 408–419; that stretch reads KDSIGSKSKKQD. WD repeat units follow at residues 469–508, 542–581, 584–625, 626–667, 668–707, and 710–749; these read NAYQ…LRSV, GHSG…CLVG, GHNY…RIFA, GHLA…RIFT, GHKG…MVGE, and GHTD…EDLE.

Belongs to the WD repeat TAF5 family. In terms of assembly, homodimer. Component of the TFIID basal transcription factor complex, composed of TATA-box-binding protein TBP, and a number of TBP-associated factors (TAFs), including TAF1, TAF2, TAF3, TAF4, TAF5, TAF6, TAF7, TAF8, TAF9, TAF10, TAF11, TAF12 and TAF13. The TFIID complex structure can be divided into 3 modules TFIID-A, TFIID-B, and TFIID-C. TAF5 forms the TFIID-A module together with TAF3 and TBP, and in TFIID-B with TAF8. Component of the TFTC-HAT complex, at least composed of TAF5L, TAF6L, TADA3L, SUPT3H/SPT3, TAF2, TAF4, TAF5, GCN5L2/GCN5, TAF10 and TRRAP. TBP is not part of the TFTC-HAT complex. Interacts strongly with the histone H4-related TAF6 and the histone H3-related TAF9, as well as a stable complex comprised of both TAF6 and TAF9. Apparently weaker interactions with TBP, TAF1, TAF11, and TAF12, but not TAF7, also have been observed.

The protein localises to the nucleus. The TFIID basal transcription factor complex plays a major role in the initiation of RNA polymerase II (Pol II)-dependent transcription. TFIID recognizes and binds promoters with or without a TATA box via its subunit TBP, a TATA-box-binding protein, and promotes assembly of the pre-initiation complex (PIC). The TFIID complex consists of TBP and TBP-associated factors (TAFs), including TAF1, TAF2, TAF3, TAF4, TAF5, TAF6, TAF7, TAF8, TAF9, TAF10, TAF11, TAF12 and TAF13. The TFIID complex structure can be divided into 3 modules TFIID-A, TFIID-B, and TFIID-C. TAF5 is involved in two modules of TFIID, in TFIID-A together with TAF3 and TBP, and in TFIID-B with TAF8. Involved in contacts between TFIID and TFIIF in the PIC. The protein is Transcription initiation factor TFIID subunit 5 (Taf5) of Mus musculus (Mouse).